The primary structure comprises 105 residues: Phosphoribosyl-AMP cyclohydrolase (105 aa).

D72 provides a ligand contact to Mg(2+). C73 is a Zn(2+) binding site. Mg(2+) contacts are provided by D74 and D76. C89 and C96 together coordinate Zn(2+).

It belongs to the PRA-CH family. Homodimer. Mg(2+) serves as cofactor. Zn(2+) is required as a cofactor.

Its subcellular location is the cytoplasm. It catalyses the reaction 1-(5-phospho-beta-D-ribosyl)-5'-AMP + H2O = 1-(5-phospho-beta-D-ribosyl)-5-[(5-phospho-beta-D-ribosylamino)methylideneamino]imidazole-4-carboxamide. Its pathway is amino-acid biosynthesis; L-histidine biosynthesis; L-histidine from 5-phospho-alpha-D-ribose 1-diphosphate: step 3/9. Functionally, catalyzes the hydrolysis of the adenine ring of phosphoribosyl-AMP. In Listeria monocytogenes serotype 4b (strain CLIP80459), this protein is Phosphoribosyl-AMP cyclohydrolase.